The chain runs to 347 residues: 4-hydroxythreonine-4-phosphate dehydrogenase (347 aa).

The substrate site is built by histidine 137 and threonine 138. A divalent metal cation is bound by residues histidine 174, histidine 219, and histidine 274. The substrate site is built by lysine 282, asparagine 291, and arginine 300.

This sequence belongs to the PdxA family. Homodimer. Zn(2+) serves as cofactor. It depends on Mg(2+) as a cofactor. Requires Co(2+) as cofactor.

It localises to the cytoplasm. It carries out the reaction 4-(phosphooxy)-L-threonine + NAD(+) = 3-amino-2-oxopropyl phosphate + CO2 + NADH. It functions in the pathway cofactor biosynthesis; pyridoxine 5'-phosphate biosynthesis; pyridoxine 5'-phosphate from D-erythrose 4-phosphate: step 4/5. Catalyzes the NAD(P)-dependent oxidation of 4-(phosphooxy)-L-threonine (HTP) into 2-amino-3-oxo-4-(phosphooxy)butyric acid which spontaneously decarboxylates to form 3-amino-2-oxopropyl phosphate (AHAP). This chain is 4-hydroxythreonine-4-phosphate dehydrogenase, found in Cupriavidus pinatubonensis (strain JMP 134 / LMG 1197) (Cupriavidus necator (strain JMP 134)).